The chain runs to 292 residues: Glycine--tRNA ligase alpha subunit (292 aa).

This sequence belongs to the class-II aminoacyl-tRNA synthetase family. In terms of assembly, tetramer of two alpha and two beta subunits.

It localises to the cytoplasm. It catalyses the reaction tRNA(Gly) + glycine + ATP = glycyl-tRNA(Gly) + AMP + diphosphate. This Desulfovibrio desulfuricans (strain ATCC 27774 / DSM 6949 / MB) protein is Glycine--tRNA ligase alpha subunit.